We begin with the raw amino-acid sequence, 523 residues long: Flavin-dependent halogenase armH5 (523 aa).

Residues G17, A20, and E50 each coordinate FAD. Residues S328 and G329 each coordinate chloride. FAD is bound at residue V330.

It belongs to the flavin-dependent halogenase family.

It carries out the reaction melleolide F + FADH2 + chloride + O2 = 6'-chloromelleolide F + FAD + 2 H2O + H(+). Its function is as follows. Flavin-dependent halogenase involved in the biosynthesis of melleolides, a range of antifungal and phytotoxic polyketide derivatives composed of an orsellinic acid (OA) moiety esterified to various sesquiterpene alcohols. The halogenase catalyzes the transfer of a single chlorine atom to the melleolide backbone, resulting in a 6'-chloromelleolide product. The enzyme acts on free substrate and does not depend on carrier-protein-dependent acceptor molecules. This is Flavin-dependent halogenase armH5 from Armillaria mellea (Honey mushroom).